The chain runs to 331 residues: Anthranilate phosphoribosyltransferase (331 aa).

Residues glycine 78, glycine 81 to aspartate 82, threonine 86, asparagine 88 to threonine 91, lysine 106 to serine 114, and serine 118 contribute to the 5-phospho-alpha-D-ribose 1-diphosphate site. Glycine 78 provides a ligand contact to anthranilate. Residue serine 90 coordinates Mg(2+). Position 109 (asparagine 109) interacts with anthranilate. Arginine 164 serves as a coordination point for anthranilate. Residues aspartate 222 and glutamate 223 each coordinate Mg(2+).

It belongs to the anthranilate phosphoribosyltransferase family. Homodimer. It depends on Mg(2+) as a cofactor.

The enzyme catalyses N-(5-phospho-beta-D-ribosyl)anthranilate + diphosphate = 5-phospho-alpha-D-ribose 1-diphosphate + anthranilate. It participates in amino-acid biosynthesis; L-tryptophan biosynthesis; L-tryptophan from chorismate: step 2/5. Functionally, catalyzes the transfer of the phosphoribosyl group of 5-phosphorylribose-1-pyrophosphate (PRPP) to anthranilate to yield N-(5'-phosphoribosyl)-anthranilate (PRA). The polypeptide is Anthranilate phosphoribosyltransferase (Haloferax volcanii (strain ATCC 29605 / DSM 3757 / JCM 8879 / NBRC 14742 / NCIMB 2012 / VKM B-1768 / DS2) (Halobacterium volcanii)).